A 714-amino-acid chain; its full sequence is Cell wall protein IFF7 (714 aa).

Residues Met-1–Ala-19 form the signal peptide. Residue Asn-200 is glycosylated (N-linked (GlcNAc...) asparagine). Over residues Gly-320–Ser-330 the composition is skewed to polar residues. Disordered stretches follow at residues Gly-320–Ser-633 and Pro-660–Ser-692. Low complexity predominate over residues Gly-346–Ser-504. Asn-390, Asn-394, Asn-399, Asn-421, and Asn-473 each carry an N-linked (GlcNAc...) asparagine glycan. Polar residues predominate over residues Gln-505 to Ala-519. Residues Ser-520–Gly-544 are compositionally biased toward low complexity. The segment covering Val-545–Gln-558 has biased composition (polar residues). 2 stretches are compositionally biased toward low complexity: residues Ser-559 to Gly-590 and Asn-597 to Asn-625. Asn-577, Asn-621, Asn-624, and Asn-663 each carry an N-linked (GlcNAc...) asparagine glycan. Low complexity predominate over residues Ser-665–Ser-679. A glycan (N-linked (GlcNAc...) asparagine) is linked at Asn-690. A lipid anchor (GPI-anchor amidated asparagine) is attached at Asn-690. Positions Gly-691–Met-714 are cleaved as a propeptide — removed in mature form.

This sequence belongs to the HYR1/IFF family. Post-translationally, the GPI-anchor is attached to the protein in the endoplasmic reticulum and serves to target the protein to the cell surface. There, the glucosamine-inositol phospholipid moiety is cleaved off and the GPI-modified mannoprotein is covalently attached via its lipidless GPI glycan remnant to the 1,6-beta-glucan of the outer cell wall layer.

Its subcellular location is the secreted. The protein resides in the cell wall. It is found in the membrane. GPI-anchored cell wall protein involved in cell wall organization, hyphal growth, as well as in host-fungal interaction and virulence. The chain is Cell wall protein IFF7 (IFF8) from Candida albicans (strain SC5314 / ATCC MYA-2876) (Yeast).